A 449-amino-acid chain; its full sequence is Gamma-aminobutyric acid receptor subunit delta (449 aa).

The first 24 residues, 1-24 (MDVLGWLLLPLLLLCTQPHHGARA), serve as a signal peptide directing secretion. Over 25-251 (MNDIGDYVGS…QLRRNRGVYI (227 aa)) the chain is Extracellular. Asn-103 and Asn-106 each carry an N-linked (GlcNAc...) asparagine glycan. Cys-164 and Cys-178 form a disulfide bridge. Residues 252-271 (IQSYMPSVLLVAMSWVSFWI) traverse the membrane as a helical segment. Topologically, residues 272–275 (SQAA) are cytoplasmic. The chain crosses the membrane as a helical span at residues 276 to 298 (VPARVSLGITTVLTMTTLMVSAR). Over 299-308 (SSLPRASAIK) the chain is Extracellular. The chain crosses the membrane as a helical span at residues 309–331 (ALDVYFWICYVFVFAALVEYAFA). At 332 to 423 (HFNADYRKKR…SRLKPIDADT (92 aa)) the chain is on the cytoplasmic side. Ser-390 is subject to Phosphoserine. A helical transmembrane segment spans residues 424–446 (IDIYARAVFPAAFAAVNIIYWAA). Topologically, residues 447–449 (YTM) are extracellular.

Belongs to the ligand-gated ion channel (TC 1.A.9) family. Gamma-aminobutyric acid receptor (TC 1.A.9.5) subfamily. GABRD sub-subfamily. Heteropentamer, formed by a combination of alpha (GABRA1-6), beta (GABRB1-3), gamma (GABRG1-3), delta (GABRD), epsilon (GABRE), rho (GABRR1-3), pi (GABRP) and theta (GABRQ) chains, each subunit exhibiting distinct physiological and pharmacological properties. As to expression, found in the brain, in cerebellar granule cells. Expressed in lungs, in alveolar epithelium.

It localises to the cell membrane. It catalyses the reaction chloride(in) = chloride(out). Functionally, delta subunit of the heteropentameric ligand-gated chloride channel gated by gamma-aminobutyric acid (GABA), a major inhibitory neurotransmitter in the brain. GABA-gated chloride channels, also named GABA(A) receptors (GABAAR), consist of five subunits arranged around a central pore and contain GABA active binding site(s) located at the alpha and beta subunit interface(s). When activated by GABA, GABAARs selectively allow the flow of chloride anions across the cell membrane down their electrochemical gradient. GABAARs containing delta/GABRD subunits are predominantly expressed and located in extrasynaptic or perisynaptic positions on hippocampus and cerebellar granule cells, and contribute to the tonic GABAergic inhibition. GABAAR containing alpha-4-beta-3-delta subunits can simultaneously bind GABA and histamine where histamine binds at the interface of two neighboring beta subunits, which may be involved in the regulation of sleep and wakefulness. This chain is Gamma-aminobutyric acid receptor subunit delta, found in Rattus norvegicus (Rat).